The following is a 445-amino-acid chain: GTPase Der (445 aa).

2 consecutive EngA-type G domains span residues 3–167 (PVIA…YAGQ) and 180–353 (VKIA…AAAM). Residues 9 to 16 (GRPNVGKS), 56 to 60 (DTGGF), 119 to 122 (NKAE), 186 to 193 (GRPNVGKS), 233 to 237 (DTAGL), and 298 to 301 (NKWD) contribute to the GTP site. The KH-like domain occupies 354–438 (AKLPTPKLTR…PLRIEFRSST (85 aa)).

It belongs to the TRAFAC class TrmE-Era-EngA-EngB-Septin-like GTPase superfamily. EngA (Der) GTPase family. In terms of assembly, associates with the 50S ribosomal subunit.

Functionally, GTPase that plays an essential role in the late steps of ribosome biogenesis. The sequence is that of GTPase Der from Paraburkholderia xenovorans (strain LB400).